The primary structure comprises 218 residues: Probable signal peptidase I-2 (218 aa).

The Cytoplasmic segment spans residues 1–26; it reads MTENIVRETSKKKESPPENTWLELGK. Residues 27-43 form a helical membrane-spanning segment; that stretch reads TMVTAVILAIGIRTFVA. The Periplasmic portion of the chain corresponds to 44–218; the sequence is EARYIPSSSM…ISPQTVPESR (175 aa). Active-site residues include serine 52 and lysine 100.

Belongs to the peptidase S26 family.

The protein resides in the cell membrane. The enzyme catalyses Cleavage of hydrophobic, N-terminal signal or leader sequences from secreted and periplasmic proteins.. The sequence is that of Probable signal peptidase I-2 (lepB2) from Synechocystis sp. (strain ATCC 27184 / PCC 6803 / Kazusa).